Consider the following 324-residue polypeptide: Lactonase drp35 (324 aa).

The Ca(2+) site is built by Glu-47, Ser-109, Gly-111, Asp-129, Thr-132, Tyr-134, Asp-137, Asn-184, Asp-235, and Ser-236. The Proton donor role is filled by Asp-235.

The protein belongs to the SMP-30/CGR1 family. Ca(2+) serves as cofactor.

It localises to the cytoplasm. Its function is as follows. Exhibits lactonase activity. Acts in cells with perturbed membrane integrity and is possibly related to the membrane homeostasis. The polypeptide is Lactonase drp35 (drp35) (Staphylococcus aureus (strain USA300)).